The sequence spans 134 residues: MSEALKSLNNIRTLRAQGRELPLEILEELLEKLSVVVEERRQEESSKEAELKARLEKIESLRQLMLEDGIDPEELLSSFSAKSGAPKKVREPRPAKYKYTDVNGETKTWTGQGRTPKALAEQLEAGKKLDDFLI.

The stretch at leucine 23–glutamate 67 forms a coiled coil. The disordered stretch occupies residues serine 77–lysine 96. Residues glutamine 112 to lysine 117 mediate DNA binding.

Belongs to the histone-like protein H-NS family. In terms of assembly, homodimer that oligomerizes on DNA into higher-order complexes that form bridges between disparate regions of DNA compacting it. Interacts with Hha, YdgT and StpA.

The protein localises to the cytoplasm. Its subcellular location is the nucleoid. A DNA-binding protein implicated in transcriptional repression and chromosome organization and compaction. Binds DNA, modifying gene expression, especially non-core genes. Does not regulate the same set of genes as its chromosomal counterpart (tested in S.typhimurium strain SL1344 / SV5015, chromosomal H-NS protein is AC A0A0H3NBY9). Thus it has a not-completely overlapping set of gene targets compared to its chromosomal homolog; many of these target genes are either plasmid-encoded or acquired by horizontally transferred genes (HTG). This protein can function in the absence of H-NS-modulating protein Hha (either chromosomal or plasmid-encoded), although many HTG genes are regulated by an H-NS/Hha complex. Binds nucleation sites in AT-rich DNA and bridges them, forming higher-order nucleoprotein complexes and condensing the chromosome. A subset of genes are repressed by H-NS in association with Hha and/or Cnu (ydgT). The polypeptide is DNA-binding protein H-NS, plasmid (hns) (Salmonella typhi).